The primary structure comprises 1032 residues: Importin beta-like protein KAP120 (1032 aa).

Ala2 carries the post-translational modification N-acetylalanine. Residues 31-103 (AEQQLRQWET…RGRLFEMIDE (73 aa)) enclose the Importin N-terminal domain.

Belongs to the importin beta family. In terms of assembly, interacts with GTP-bound GSP1 and RFP1. Associates with the nuclear pore complex.

It localises to the cytoplasm. The protein resides in the nucleus. Functions in nuclear protein import as nuclear transport receptor. Serves as receptor for nuclear localization signals (NLS) in cargo substrates. Thought to mediate docking of the importin/substrate complex to the nuclear pore complex (NPC) through binding to nucleoporin and the complex is subsequently translocated through the pore by an energy requiring, RAN-dependent mechanism. Required for nuclear import of Ho endonuclease and RFP1, and involved in rRNA-processing and assembly or export of 60S ribosomal subunits. The polypeptide is Importin beta-like protein KAP120 (KAP120) (Saccharomyces cerevisiae (strain ATCC 204508 / S288c) (Baker's yeast)).